A 564-amino-acid polypeptide reads, in one-letter code: Urocanate hydratase (564 aa).

NAD(+)-binding positions include 58-59 (GG), glutamine 136, 182-184 (GMG), glutamate 202, arginine 207, 245-246 (NA), 266-270 (QTSAH), 276-277 (YL), and tyrosine 325. Cysteine 413 is an active-site residue. Glycine 495 contacts NAD(+).

It belongs to the urocanase family. NAD(+) is required as a cofactor.

It localises to the cytoplasm. The enzyme catalyses 4-imidazolone-5-propanoate = trans-urocanate + H2O. It functions in the pathway amino-acid degradation; L-histidine degradation into L-glutamate; N-formimidoyl-L-glutamate from L-histidine: step 2/3. Its function is as follows. Catalyzes the conversion of urocanate to 4-imidazolone-5-propionate. In Vibrio atlanticus (strain LGP32) (Vibrio splendidus (strain Mel32)), this protein is Urocanate hydratase.